We begin with the raw amino-acid sequence, 241 residues long: Glutathione S-transferase omega-1 (241 aa).

An N-acetylserine modification is found at Ser-2. Residues 22 to 101 (GLIRVYSMRF…YLDEAYPGKK (80 aa)) form the GST N-terminal domain. The active-site Nucleophile is the Cys-32. Position 57 is an N6-acetyllysine (Lys-57). Glutathione-binding positions include Lys-59, Val-72, and 85–86 (ES). One can recognise a GST C-terminal domain in the interval 106–225 (DPYEKACQKM…HIEPRDLRAF (120 aa)). Lys-143, Lys-148, and Lys-152 each carry N6-acetyllysine.

In terms of assembly, homodimer. In terms of tissue distribution, most abundant in the liver and skeletal muscle; also expressed in heart, diaphragm, colon, thymus, kidney, lung, ovaries, spleen, intestine and pancreas.

The protein localises to the cytoplasm. It is found in the cytosol. The enzyme catalyses RX + glutathione = an S-substituted glutathione + a halide anion + H(+). It carries out the reaction L-dehydroascorbate + 2 glutathione = glutathione disulfide + L-ascorbate. The catalysed reaction is methylarsonate + 2 glutathione + H(+) = methylarsonous acid + glutathione disulfide + H2O. Its function is as follows. Exhibits glutathione-dependent thiol transferase and dehydroascorbate reductase activities. Has S-(phenacyl)glutathione reductase activity. Also has glutathione S-transferase activity. Participates in the biotransformation of inorganic arsenic and reduces monomethylarsonic acid (MMA) and dimethylarsonic acid. In Sus scrofa (Pig), this protein is Glutathione S-transferase omega-1 (GSTO1).